The following is a 132-amino-acid chain: Small ribosomal subunit protein uS8 (132 aa).

This sequence belongs to the universal ribosomal protein uS8 family. In terms of assembly, part of the 30S ribosomal subunit. Contacts proteins S5 and S12.

Its function is as follows. One of the primary rRNA binding proteins, it binds directly to 16S rRNA central domain where it helps coordinate assembly of the platform of the 30S subunit. The sequence is that of Small ribosomal subunit protein uS8 from Bradyrhizobium sp. (strain ORS 278).